Consider the following 534-residue polypeptide: GMP synthase [glutamine-hydrolyzing] (534 aa).

One can recognise a Glutamine amidotransferase type-1 domain in the interval 20–210 (MLIILDFGSQ…VYHICDCEPT (191 aa)). Cys-97 (nucleophile) is an active-site residue. Catalysis depends on residues His-184 and Glu-186. A GMPS ATP-PPase domain is found at 211–409 (WTTETFVEEA…LGLPEEIVKR (199 aa)). 238 to 244 (SGGVDSS) is an ATP binding site.

Homodimer.

It catalyses the reaction XMP + L-glutamine + ATP + H2O = GMP + L-glutamate + AMP + diphosphate + 2 H(+). It participates in purine metabolism; GMP biosynthesis; GMP from XMP (L-Gln route): step 1/1. Catalyzes the synthesis of GMP from XMP. The chain is GMP synthase [glutamine-hydrolyzing] from Synechococcus sp. (strain ATCC 27144 / PCC 6301 / SAUG 1402/1) (Anacystis nidulans).